The sequence spans 396 residues: Elongation factor Tu (396 aa).

The 197-residue stretch at 10-206 (KPHVNVGTIG…ALDSYIPEPT (197 aa)) folds into the tr-type G domain. Positions 19 to 26 (GHVDHGKT) are G1. 19–26 (GHVDHGKT) contacts GTP. Thr26 lines the Mg(2+) pocket. Residues 60–64 (GITIS) are G2. The G3 stretch occupies residues 81–84 (DCPG). Residues 81–85 (DCPGH) and 136–139 (NKAD) contribute to the GTP site. Residues 136-139 (NKAD) are G4. Positions 174 to 176 (SAL) are G5.

This sequence belongs to the TRAFAC class translation factor GTPase superfamily. Classic translation factor GTPase family. EF-Tu/EF-1A subfamily. Monomer.

The protein resides in the cytoplasm. It carries out the reaction GTP + H2O = GDP + phosphate + H(+). Its function is as follows. GTP hydrolase that promotes the GTP-dependent binding of aminoacyl-tRNA to the A-site of ribosomes during protein biosynthesis. In Hydrogenovibrio crunogenus (strain DSM 25203 / XCL-2) (Thiomicrospira crunogena), this protein is Elongation factor Tu.